The following is a 680-amino-acid chain: DNA-directed RNA polymerase subunit beta' (680 aa).

Positions 69, 71, 87, and 90 each coordinate Zn(2+). Mg(2+) is bound by residues Asp489, Asp491, and Asp493.

Belongs to the RNA polymerase beta' chain family. RpoC1 subfamily. In terms of assembly, in plastids the minimal PEP RNA polymerase catalytic core is composed of four subunits: alpha, beta, beta', and beta''. When a (nuclear-encoded) sigma factor is associated with the core the holoenzyme is formed, which can initiate transcription. It depends on Mg(2+) as a cofactor. Zn(2+) is required as a cofactor.

It is found in the plastid. The protein resides in the chloroplast. It carries out the reaction RNA(n) + a ribonucleoside 5'-triphosphate = RNA(n+1) + diphosphate. Functionally, DNA-dependent RNA polymerase catalyzes the transcription of DNA into RNA using the four ribonucleoside triphosphates as substrates. This is DNA-directed RNA polymerase subunit beta' from Ceratophyllum demersum (Rigid hornwort).